Reading from the N-terminus, the 80-residue chain is DNA-binding protein HU-like (80 aa).

The protein belongs to the bacterial histone-like protein family.

Its function is as follows. Histone-like DNA-binding protein which is capable of wrapping DNA to stabilize it, and thus to prevent its denaturation under extreme environmental conditions. The sequence is that of DNA-binding protein HU-like from Rickettsia rickettsii (strain Sheila Smith).